The chain runs to 120 residues: Large ribosomal subunit protein P3 (120 aa).

Positions 83–120 (GGGGAAASGGAAAEAPKEEKKEEEKEESDDDMGFSLFD) are disordered.

It belongs to the eukaryotic ribosomal protein P1/P2 family. In terms of processing, phosphorylated.

Plays an important role in the elongation step of protein synthesis. This is Large ribosomal subunit protein P3 (RPP3A) from Zea mays (Maize).